The chain runs to 245 residues: DNA repair protein RecO (245 aa).

Belongs to the RecO family.

Its function is as follows. Involved in DNA repair and RecF pathway recombination. The protein is DNA repair protein RecO of Anaplasma phagocytophilum (strain HZ).